Consider the following 245-residue polypeptide: Ribosome maturation factor RimP (245 aa).

Belongs to the RimP family.

It localises to the cytoplasm. Required for maturation of 30S ribosomal subunits. The sequence is that of Ribosome maturation factor RimP from Verminephrobacter eiseniae (strain EF01-2).